The primary structure comprises 552 residues: Probable malate:quinone oxidoreductase (552 aa).

The disordered stretch occupies residues 530–552 (DAKPATPEAKPAQASSPQHDMAL). The span at 542 to 552 (QASSPQHDMAL) shows a compositional bias: polar residues.

Belongs to the MQO family. FAD is required as a cofactor.

It catalyses the reaction (S)-malate + a quinone = a quinol + oxaloacetate. It participates in carbohydrate metabolism; tricarboxylic acid cycle; oxaloacetate from (S)-malate (quinone route): step 1/1. The chain is Probable malate:quinone oxidoreductase from Cronobacter sakazakii (strain ATCC BAA-894) (Enterobacter sakazakii).